We begin with the raw amino-acid sequence, 166 residues long: Interferon gamma (166 aa).

Positions 1–23 are cleaved as a signal peptide; sequence MNYTSYILAFQLCVILCSSGCNC. Gln-24 carries the post-translational modification Pyrrolidone carboxylic acid. Asn-39 and Asn-106 each carry an N-linked (GlcNAc...) asparagine glycan.

It belongs to the type II (or gamma) interferon family. In terms of assembly, homodimer. Interacts with IFNGR1 (via extracellular domain); this interaction promotes IFNGR1 dimerization. Released primarily from activated T lymphocytes.

It localises to the secreted. Its function is as follows. Type II interferon produced by immune cells such as T-cells and NK cells that plays crucial roles in antimicrobial, antiviral, and antitumor responses by activating effector immune cells and enhancing antigen presentation. Primarily signals through the JAK-STAT pathway after interaction with its receptor IFNGR1 to affect gene regulation. Upon IFNG binding, IFNGR1 intracellular domain opens out to allow association of downstream signaling components JAK2, JAK1 and STAT1, leading to STAT1 activation, nuclear translocation and transcription of IFNG-regulated genes. Many of the induced genes are transcription factors such as IRF1 that are able to further drive regulation of a next wave of transcription. Plays a role in class I antigen presentation pathway by inducing a replacement of catalytic proteasome subunits with immunoproteasome subunits. In turn, increases the quantity, quality, and repertoire of peptides for class I MHC loading. Increases the efficiency of peptide generation also by inducing the expression of activator PA28 that associates with the proteasome and alters its proteolytic cleavage preference. Up-regulates as well MHC II complexes on the cell surface by promoting expression of several key molecules such as cathepsins B/CTSB, H/CTSH, and L/CTSL. Participates in the regulation of hematopoietic stem cells during development and under homeostatic conditions by affecting their development, quiescence, and differentiation. The protein is Interferon gamma (IFNG) of Canis lupus familiaris (Dog).